Consider the following 147-residue polypeptide: 3-dehydroquinate dehydratase (147 aa).

Tyr-22 acts as the Proton acceptor in catalysis. Substrate is bound by residues Asn-73, His-79, and Asp-86. The active-site Proton donor is His-99. Substrate contacts are provided by residues 100-101 (LS) and Arg-110.

This sequence belongs to the type-II 3-dehydroquinase family. Homododecamer.

The enzyme catalyses 3-dehydroquinate = 3-dehydroshikimate + H2O. It participates in metabolic intermediate biosynthesis; chorismate biosynthesis; chorismate from D-erythrose 4-phosphate and phosphoenolpyruvate: step 3/7. Functionally, catalyzes a trans-dehydration via an enolate intermediate. The polypeptide is 3-dehydroquinate dehydratase (Synechococcus sp. (strain WH7803)).